We begin with the raw amino-acid sequence, 140 residues long: Hemoglobin subunit alpha-D (140 aa).

Residues Met1–Arg140 form the Globin domain. His57 and His86 together coordinate heme b.

The protein belongs to the globin family. Heterotetramer of two alpha-D chains and two beta chains. Red blood cells.

Involved in oxygen transport from the lung to the various peripheral tissues. The sequence is that of Hemoglobin subunit alpha-D (HBAD) from Columba livia (Rock dove).